The chain runs to 925 residues: Nuclear factor of activated T-cells, cytoplasmic 2 (925 aa).

The disordered stretch occupies residues 1–95 (MNAPERQPQP…FGEPDRVGPQ (95 aa)). Ser-23 is modified (phosphoserine). The 9aaTAD motif lies at 26–34 (DELDFSILF). Ser-99, Ser-107, and Ser-110 each carry phosphoserine. The calcineurin-binding stretch occupies residues 111 to 116 (PRIEIT). The transactivation domain A (TAD-A) stretch occupies residues 119–199 (HELIQAVGPL…CVSPNNGGPD (81 aa)). A phosphoserine mark is found at Ser-148, Ser-168, Ser-171, Ser-172, Ser-174, Ser-175, Ser-177, and Ser-180. Residues 161–175 (YREPLCLSPASSGSS) are required for cytoplasmic retention of the phosphorylated form. A run of 2 repeats spans residues 184-200 (SPYTSPCVSPNNGGPDD) and 213-229 (SPRTSPIMSPRTSLAED). Residues 184–286 (SPYTSPCVSP…PQPSSHVAPQ (103 aa)) are 3 X approximate SP repeats. Positions 195-297 (NGGPDDLCPQ…HGSPAGYPPV (103 aa)) are disordered. Phosphoserine is present on residues Ser-213, Ser-217, Ser-221, Ser-236, and Ser-243. Positions 214 to 224 (PRTSPIMSPRT) are enriched in polar residues. Positions 251-253 (KRR) match the Nuclear localization signal motif. Residues Ser-255, Ser-268, Ser-274, Ser-276, Ser-280, Ser-326, Ser-330, and Ser-363 each carry the phosphoserine modification. The segment covering 264 to 281 (PPGASPQRSRSPSPQPSS) has biased composition (low complexity). A 3; approximate repeat occupies 272–286 (SRSPSPQPSSHVAPQ). The region spanning 392-574 (ASLPPLEWPL…NPIECSQRSA (183 aa)) is the RHD domain. A DNA-binding region spans residues 421–428 (RAHYETEG). Positions 664–666 (KRK) match the Nuclear localization signal motif. Phosphoserine is present on residues Ser-755, Ser-757, Ser-759, Ser-856, and Ser-859. Residues 839–894 (PGTTRPGPPPVSQGQRLSPGSYPTVIQQQNATSQRAAKNGPPVSDQKEVLPAGVTI) are disordered. A compositionally biased stretch (polar residues) spans 862–874 (TVIQQQNATSQRA). A Nuclear export signal motif is present at residues 904 to 913 (YLDDVNEIIR).

In terms of assembly, member of the multicomponent NFATC transcription complex that consists of at least two components, a pre-existing cytoplasmic component NFATC2 and an inducible nuclear component NFATC1. Other members such as NFATC4, NFATC3 or members of the activating protein-1 family, MAF, GATA4 and Cbp/p300 can also bind the complex. The phosphorylated form specifically interacts with XPO1; which mediates nuclear export. NFATC proteins bind to DNA as monomers. Interacts with NFATC2IP. Interacts with FOXP3. Interacts with TBX21 ('Thr-303' phosphorylated form). Interacts with KAT2A. Interacts with HOMER2 and HOMER3; this interaction competes with calcineurin/PPP3CA-binding and hence prevents NFATC2 dephosphorylation and activation. Interacts with protein phosphatase PPP3CA/calcineurin A. Interacts with AKAP5 (via leucine zipper domain); this is required for NFATC2/NFAT1 recruitment to CRAC channels. Post-translationally, in resting cells, phosphorylated by NFATC-kinase on at least 18 sites in the 99-363 region. Upon cell stimulation, all these sites except Ser-243 are dephosphorylated by calcineurin. Dephosphorylation induces a conformational change that simultaneously exposes an NLS and masks an NES, which results in nuclear localization. Simultaneously, Ser-53 or Ser-56 is phosphorylated; which is required for full transcriptional activity. Ubiquitinated in endothelial cells by RNF213 downstream of the non-canonical Wnt signaling pathway, leading to its degradation by the proteasome. As to expression, expressed in thymus, spleen, heart, testis, brain, placenta, muscle and pancreas. Isoform 1 is highly expressed in the small intestine, heart, testis, prostate, thymus, placenta and thyroid. Isoform 3 is highly expressed in stomach, uterus, placenta, trachea and thyroid.

It is found in the cytoplasm. The protein localises to the nucleus. Plays a role in the inducible expression of cytokine genes in T-cells, especially in the induction of the IL-2, IL-3, IL-4, TNF-alpha or GM-CSF. Promotes invasive migration through the activation of GPC6 expression and WNT5A signaling pathway. Is involved in the negative regulation of chondrogenesis. Recruited by AKAP5 to ORAI1 pore-forming subunit of CRAC channels in Ca(2+) signaling microdomains where store-operated Ca(2+) influx is coupled to calmodulin and calcineurin signaling and activation of NFAT-dependent transcriptional responses. The polypeptide is Nuclear factor of activated T-cells, cytoplasmic 2 (NFATC2) (Homo sapiens (Human)).